Reading from the N-terminus, the 158-residue chain is UPF0329 protein ECU06_0050 (158 aa).

Belongs to the UPF0329 family.

This is UPF0329 protein ECU06_0050 from Encephalitozoon cuniculi (strain GB-M1) (Microsporidian parasite).